Here is a 247-residue protein sequence, read N- to C-terminus: Adenosylcobinamide-GDP ribazoletransferase (247 aa).

The next 5 helical transmembrane spans lie at 1–21, 37–57, 61–81, 109–129, and 176–196; these read MLRL…PFSF, LVGL…ALAL, VADL…HLDG, AVGV…LFAV, and VAVA…LPGI.

The protein belongs to the CobS family. The cofactor is Mg(2+).

Its subcellular location is the cell inner membrane. The enzyme catalyses alpha-ribazole + adenosylcob(III)inamide-GDP = adenosylcob(III)alamin + GMP + H(+). It carries out the reaction alpha-ribazole 5'-phosphate + adenosylcob(III)inamide-GDP = adenosylcob(III)alamin 5'-phosphate + GMP + H(+). The protein operates within cofactor biosynthesis; adenosylcobalamin biosynthesis; adenosylcobalamin from cob(II)yrinate a,c-diamide: step 7/7. Functionally, joins adenosylcobinamide-GDP and alpha-ribazole to generate adenosylcobalamin (Ado-cobalamin). Also synthesizes adenosylcobalamin 5'-phosphate from adenosylcobinamide-GDP and alpha-ribazole 5'-phosphate. This Geotalea daltonii (strain DSM 22248 / JCM 15807 / FRC-32) (Geobacter daltonii) protein is Adenosylcobinamide-GDP ribazoletransferase.